We begin with the raw amino-acid sequence, 314 residues long: Bifunctional riboflavin kinase/FMN adenylyltransferase (314 aa).

Belongs to the RibF family.

The catalysed reaction is riboflavin + ATP = FMN + ADP + H(+). The enzyme catalyses FMN + ATP + H(+) = FAD + diphosphate. Its pathway is cofactor biosynthesis; FAD biosynthesis; FAD from FMN: step 1/1. It participates in cofactor biosynthesis; FMN biosynthesis; FMN from riboflavin (ATP route): step 1/1. Its function is as follows. Catalyzes the phosphorylation of riboflavin to FMN followed by the adenylation of FMN to FAD. Can also catalyze the phosphorylation of the toxic riboflavin analogs 8-demethyl-8-aminoriboflavin (AF) to 8-demethyl-8-aminoriboflavin mononucleotide (AFMN) and roseoflavin (RoF) to roseoflavin mononucleotide (RoFMN), and the adenylation of AFMN to 8-demethyl-8-aminoriboflavin adenine dinucleotide (AFAD). The protein is Bifunctional riboflavin kinase/FMN adenylyltransferase of Listeria monocytogenes serovar 1/2a (strain ATCC BAA-679 / EGD-e).